The primary structure comprises 678 residues: uncharacterized protein (678 aa).

Disordered regions lie at residues 123 to 156 and 381 to 417; these read TPLS…TDSV and TETT…TEHS.

It is found in the cytoplasm. This is an uncharacterized protein from Schizosaccharomyces pombe (strain 972 / ATCC 24843) (Fission yeast).